Here is a 656-residue protein sequence, read N- to C-terminus: Chaperone protein DnaK (656 aa).

Over residues 590-605 (GGAAGGAAGGAAGGAA) the composition is skewed to gly residues. The interval 590–656 (GGAAGGAAGG…DGQPKPGPAA (67 aa)) is disordered. Low complexity predominate over residues 606 to 621 (GDAAGAAGDSTGDAAG). The segment covering 622–635 (AAGGPSEGPAGDAG) has biased composition (gly residues).

This sequence belongs to the heat shock protein 70 family.

Functionally, acts as a chaperone. The sequence is that of Chaperone protein DnaK from Cenarchaeum symbiosum (strain A).